A 122-amino-acid chain; its full sequence is UPF0344 protein BPUM_1008 (122 aa).

A run of 4 helical transmembrane segments spans residues 5 to 25 (LHIT…ALAG), 33 to 53 (IVHM…VELY), 60 to 80 (IPGF…VIGF), and 93 to 113 (SVTG…LLGL).

Belongs to the UPF0344 family.

The protein resides in the cell membrane. This is UPF0344 protein BPUM_1008 from Bacillus pumilus (strain SAFR-032).